The chain runs to 397 residues: Dimethyladenosine transferase 2, mitochondrial (397 aa).

The transit peptide at Met-1–Phe-44 directs the protein to the mitochondrion. S-adenosyl-L-methionine-binding residues include Ile-75, Glu-124, and Asp-150. Positions Lys-329 to Arg-330 are DNA-binding.

This sequence belongs to the class I-like SAM-binding methyltransferase superfamily. rRNA adenine N(6)-methyltransferase family. KsgA subfamily. As to quaternary structure, homodimer. Component of the mitochondrial transcription initiation complex, composed at least of TFB2M, TFAM and POLRMT. In this complex TFAM recruits POLRMT to the promoter whereas TFB2M induces structural changes in POLRMT to enable promoter opening and trapping of the DNA non-template strand. Interacts with mitochondrial RNA polymerase POLRMT. Interacts with TFAM.

The protein localises to the mitochondrion. It catalyses the reaction adenosine in rRNA + S-adenosyl-L-methionine = N(6)-methyladenosine in rRNA + S-adenosyl-L-homocysteine + H(+). Its function is as follows. S-adenosyl-L-methionine-dependent rRNA methyltransferase which may methylate two specific adjacent adenosines in the loop of a conserved hairpin near the 3'-end of 12S mitochondrial rRNA. Component of the mitochondrial transcription initiation complex, composed at least of TFB2M, TFAM and POLRMT that is required for basal transcription of mitochondrial DNA. In this complex TFAM recruits POLRMT to a specific promoter whereas TFB2M induces structural changes in POLRMT to enable promoter opening and trapping of the DNA non-template strand. Stimulates transcription independently of the methyltransferase activity. This Rattus norvegicus (Rat) protein is Dimethyladenosine transferase 2, mitochondrial.